Consider the following 1148-residue polypeptide: Putative ATP-dependent RNA helicase rha-2 (1148 aa).

The segment covering 1–10 has biased composition (basic and acidic residues); it reads MGKRKTKEDN. 2 disordered regions span residues 1–51 and 101–163; these read MGKR…FAKE and STKL…DAGN. The segment covering 138-160 has biased composition (acidic residues); it reads PTDDESSSEEEEEEEEGDNDIED. Positions 246 to 412 constitute a Helicase ATP-binding domain; sequence VEAINENLVT…KLFPLLTPKV (167 aa). 259–266 is a binding site for ATP; that stretch reads GETGSGKT. Positions 355 to 358 match the DEAH box motif; that stretch reads DEAH. The Helicase C-terminal domain occupies 463-703; the sequence is EVKQLITKLK…QLVLHLKSMN (241 aa).

The protein belongs to the DEAD box helicase family. DEAH subfamily.

It catalyses the reaction ATP + H2O = ADP + phosphate + H(+). In terms of biological role, probable ATP-binding RNA helicase. This is Putative ATP-dependent RNA helicase rha-2 (rha-2) from Caenorhabditis elegans.